We begin with the raw amino-acid sequence, 154 residues long: Putative pre-16S rRNA nuclease (154 aa).

Belongs to the YqgF nuclease family.

The protein resides in the cytoplasm. Could be a nuclease involved in processing of the 5'-end of pre-16S rRNA. The polypeptide is Putative pre-16S rRNA nuclease (Rickettsia africae (strain ESF-5)).